Here is a 118-residue protein sequence, read N- to C-terminus: Putative pterin-4-alpha-carbinolamine dehydratase (118 aa).

It belongs to the pterin-4-alpha-carbinolamine dehydratase family.

It catalyses the reaction (4aS,6R)-4a-hydroxy-L-erythro-5,6,7,8-tetrahydrobiopterin = (6R)-L-erythro-6,7-dihydrobiopterin + H2O. This Pseudomonas putida (strain GB-1) protein is Putative pterin-4-alpha-carbinolamine dehydratase.